A 156-amino-acid chain; its full sequence is MGSDTEAEKSIQKEKKKYAITLAPIAKPLAGKKLQKRTFKLIQKAAGKKCLKRGVKEVVKSIRRGQKGLCVIAGNISPIDVITHLPILCEEAGVPYVYVPSKEDLAQAGATKRPTCCVLVMLKPAKGDLTAEELAKLKTDYEQVSDDIKELATSVI.

This sequence belongs to the eukaryotic ribosomal protein eL8 family. As to quaternary structure, component of the small nucleolar ribonucleoprotein particle containing H/ACA-type snoRNAs (H/ACA snoRNPs).

It is found in the nucleus. The protein resides in the nucleolus. Functionally, required for ribosome biogenesis. Part of a complex which catalyzes pseudouridylation of rRNA. This involves the isomerization of uridine such that the ribose is subsequently attached to C5, instead of the normal N1. Pseudouridine ('psi') residues may serve to stabilize the conformation of rRNAs. The chain is H/ACA ribonucleoprotein complex subunit 2-like protein from Arabidopsis thaliana (Mouse-ear cress).